A 177-amino-acid polypeptide reads, in one-letter code: UPF0316 protein STH2077 (177 aa).

2 consecutive transmembrane segments (helical) span residues 9–29 (AALDLLIIFLAQATYVSVNTV) and 41–61 (LASAISFFEVILWVYALGLVV).

This sequence belongs to the UPF0316 family.

Its subcellular location is the cell membrane. This is UPF0316 protein STH2077 from Symbiobacterium thermophilum (strain DSM 24528 / JCM 14929 / IAM 14863 / T).